Reading from the N-terminus, the 620-residue chain is Glutathione-regulated potassium-efflux system protein KefC (620 aa).

A run of 12 helical transmembrane segments spans residues 4-24, 26-46, 54-74, 90-110, 114-134, 149-169, 178-198, 218-238, 270-290, 294-314, 327-347, and 359-379; these read HTLI…PIAV, LGLG…PWGL, SILH…GLEL, GALQ…LLGL, VAEL…MQAM, FAVL…IPLL, MGAF…VVLL, VFSA…EEVG, GLLL…GTLL, LRIV…LWLI, WFAV…GAAQ, and SLTL…VILN. The 120-residue stretch at 399-518 folds into the RCK N-terminal domain; sequence QPRVIIAGFG…AGVEKPERET (120 aa). Residues 597-620 form a disordered region; the sequence is GWQGTEEGKHTGNMADEPETKPSS.

Belongs to the monovalent cation:proton antiporter 2 (CPA2) transporter (TC 2.A.37) family. KefC subfamily. Homodimer. Interacts with the regulatory subunit KefF.

It localises to the cell inner membrane. Its function is as follows. Pore-forming subunit of a potassium efflux system that confers protection against electrophiles. Catalyzes K(+)/H(+) antiport. This chain is Glutathione-regulated potassium-efflux system protein KefC, found in Escherichia coli O7:K1 (strain IAI39 / ExPEC).